The primary structure comprises 110 residues: Large ribosomal subunit protein uL22 (110 aa).

Belongs to the universal ribosomal protein uL22 family. Part of the 50S ribosomal subunit.

This protein binds specifically to 23S rRNA; its binding is stimulated by other ribosomal proteins, e.g. L4, L17, and L20. It is important during the early stages of 50S assembly. It makes multiple contacts with different domains of the 23S rRNA in the assembled 50S subunit and ribosome. Functionally, the globular domain of the protein is located near the polypeptide exit tunnel on the outside of the subunit, while an extended beta-hairpin is found that lines the wall of the exit tunnel in the center of the 70S ribosome. In Janthinobacterium sp. (strain Marseille) (Minibacterium massiliensis), this protein is Large ribosomal subunit protein uL22.